The sequence spans 202 residues: Small ribosomal subunit protein uS4c (202 aa).

Residues 90–153 enclose the S4 RNA-binding domain; that stretch reads MRLDNVIFRL…KSETIISKNI (64 aa).

Belongs to the universal ribosomal protein uS4 family. In terms of assembly, part of the 30S ribosomal subunit. Contacts protein S5. The interaction surface between S4 and S5 is involved in control of translational fidelity.

It localises to the plastid. The protein resides in the chloroplast. In terms of biological role, one of the primary rRNA binding proteins, it binds directly to 16S rRNA where it nucleates assembly of the body of the 30S subunit. With S5 and S12 plays an important role in translational accuracy. The sequence is that of Small ribosomal subunit protein uS4c (rps4) from Arbusculohypopterygium arbuscula (Moss).